A 319-amino-acid polypeptide reads, in one-letter code: V-set and transmembrane domain-containing protein 4 (319 aa).

The first 23 residues, 1–23 (MRLRLLALAAAVLLGPAPEVCGA), serve as a signal peptide directing secretion. The region spanning 24-154 (LNVTVSPGPV…SSATEMRVIS (131 aa)) is the Ig-like domain. 2 N-linked (GlcNAc...) asparagine glycosylation sites follow: N25 and N41. A disulfide bridge links C46 with C126. N-linked (GlcNAc...) asparagine glycosylation occurs at N143. A helical transmembrane segment spans residues 180-200 (AVLVCCVGILSVLLFTLVIAW).

Proteolytically cleaved to generate a bioactive peptide. In terms of tissue distribution, peptide Lv is widely expressed in various tissues and the central nervous system, including the retinal photoreceptor layer, hippocampus, olfactory bulb, and cerebellum.

It is found in the cell membrane. It localises to the secreted. Its function is as follows. Peptide Lv enhances L-type voltage-gated calcium channel (L-VGCC) currents in retinal photoreceptors. The protein is V-set and transmembrane domain-containing protein 4 (Vstm4) of Mus musculus (Mouse).